A 69-amino-acid chain; its full sequence is uncharacterized protein (69 aa).

Residues 13-35 (IRSINPTLLNFINYFLLIVPQFI) form a helical membrane-spanning segment.

The protein resides in the membrane. This is an uncharacterized protein from Saccharomyces cerevisiae (strain ATCC 204508 / S288c) (Baker's yeast).